Here is a 186-residue protein sequence, read N- to C-terminus: MLDAANYTPRLKAQYAETIRAALKEEFGYKNDMMIPKLEKIVLNIGCGAEAVKDSKKAKSAQEDLSKIAGQKAITTTAKKSIAGFRVREDMPMGAKVTLRGERMYEFLDRLITIAMPRIRDFRGVKPSFDGRGNFAMGIKEHIVFPEIDFDKVDEVWGMDIVIATTAKTDAEAKSLLKHFNMPFNA.

This sequence belongs to the universal ribosomal protein uL5 family. In terms of assembly, part of the 50S ribosomal subunit; part of the 5S rRNA/L5/L18/L25 subcomplex. Contacts the 5S rRNA and the P site tRNA. Forms a bridge to the 30S subunit in the 70S ribosome.

This is one of the proteins that bind and probably mediate the attachment of the 5S RNA into the large ribosomal subunit, where it forms part of the central protuberance. In the 70S ribosome it contacts protein S13 of the 30S subunit (bridge B1b), connecting the 2 subunits; this bridge is implicated in subunit movement. Contacts the P site tRNA; the 5S rRNA and some of its associated proteins might help stabilize positioning of ribosome-bound tRNAs. The polypeptide is Large ribosomal subunit protein uL5 (Ruegeria pomeroyi (strain ATCC 700808 / DSM 15171 / DSS-3) (Silicibacter pomeroyi)).